A 210-amino-acid chain; its full sequence is Protein HEADING DATE REPRESSOR 1 (210 aa).

The tract at residues 1–97 (MEEPASADPP…GKRSSAEMLL (97 aa)) is disordered. The stretch at 29 to 49 (QQELNKEAADEQLNNQAHEEA) forms a coiled coil. Composition is skewed to basic and acidic residues over residues 45–54 (AHEEAMKIDD) and 62–79 (DDVH…RKAL). The stretch at 129–184 (RRIAIQEMNRKDREINGLNEQLEEDSRVLELLQKQLADERKKRTEIEKENSMLHEQ) forms a coiled coil.

As to quaternary structure, interacts with OSK3 and OSK4. Mostly expressed in leaves, seedlings and floral organs, and, to a lower extent, in panicle, roots, nodes, internodes, leaf joint and sheath.

It localises to the nucleus. Functionally, regulates flowering time via a photoperiod-dependent pathway. Suppressor of flowering that upregulates HD1 and down-regulates EHD1 in long days (LD), thus leading to the down-regulation of HD3A and RFT1. Triggers OSK4-mediated HD1 phosphorylation. The chain is Protein HEADING DATE REPRESSOR 1 from Oryza sativa subsp. japonica (Rice).